The primary structure comprises 484 residues: EF-hand calcium-binding domain-containing protein 14 (484 aa).

3 disordered regions span residues 1-48 (MKKR…TDEE), 227-255 (GSME…HSES), and 313-395 (EQRT…FTSD). Residues 37 to 48 (PDSDSESSTDEE) are compositionally biased toward acidic residues. Polar residues-rich tracts occupy residues 228–239 (SMENNGSNQILP), 315–324 (RTNVSSSTME), and 335–347 (LVTN…QAQS). EF-hand domains lie at 423-452 (SSIK…WNSL) and 453-484 (GSAM…ALGI). Ca(2+) contacts are provided by Asp-466, Asn-468, Asp-470, Arg-472, and Glu-477.

This chain is EF-hand calcium-binding domain-containing protein 14 (Efcab14), found in Mus musculus (Mouse).